The following is a 177-amino-acid chain: Protein C2-DOMAIN ABA-RELATED 4 (177 aa).

The region spanning 4–118 (ACPARTSSLM…LRMQLDGLPS (115 aa)) is the C2 domain. Ca(2+) is bound by residues Arg-33, Asp-34, Asp-39, Asp-85, His-86, Asp-87, and Asp-93.

Belongs to the plant CAR protein family. Dimers and oligomers. Binds to PYR/PYL/RCAR abscisic acid intracellular receptors in an ABA-independent manner, both at the plasma membrane and in the nucleus. Interacts directly with PYR1, PYL1, PYL4, PYL6 and PYL8. Binds phospholipids in a Ca(2+)-dependent manner. Interacts with YchF1. Requires Ca(2+) as cofactor.

Its subcellular location is the cell membrane. It is found in the nucleus. The protein localises to the cytoplasm. The protein resides in the cytosol. In terms of biological role, mediates the transient calcium-dependent interaction of PYR/PYL/RCAR abscisic acid (ABA) receptors with the plasma membrane and thus regulates ABA sensitivity. Stimulates the GTPase/ATPase activities of YchF1, and regulates its subcellular localization. Promotes tolerance towards salinity stress by limiting the accumulation of reactive oxygen species (ROS). Promotes resistance to bacterial pathogens (e.g. Xanthomonas oryzae pv. oryzae and P.syringae pv. tomato DC3000). Binds liposomes in the absence of exogenous Ca(2+), but this activity is enhanced in the presence of Ca(2+) and generates membrane curvature. The protein is Protein C2-DOMAIN ABA-RELATED 4 of Arabidopsis thaliana (Mouse-ear cress).